Reading from the N-terminus, the 54-residue chain is Large ribosomal subunit protein bL32c (54 aa).

A compositionally biased stretch (basic residues) spans 1-25 (MAVPKKRTSKAKKNSRKANWKRKAA). The interval 1-26 (MAVPKKRTSKAKKNSRKANWKRKAAK) is disordered.

Belongs to the bacterial ribosomal protein bL32 family.

It localises to the plastid. Its subcellular location is the chloroplast. The sequence is that of Large ribosomal subunit protein bL32c from Thalassiosira pseudonana (Marine diatom).